The following is a 192-amino-acid chain: Phosphoheptose isomerase (192 aa).

The SIS domain occupies L35–N192. Residue N50 to G52 coordinates substrate. 2 residues coordinate Zn(2+): H59 and E63. Substrate is bound by residues E63, N92–D93, S118–S120, S123, and Q170. Zn(2+) is bound by residues Q170 and H178.

Belongs to the SIS family. GmhA subfamily. In terms of assembly, homotetramer. Zn(2+) serves as cofactor.

Its subcellular location is the cytoplasm. The enzyme catalyses 2 D-sedoheptulose 7-phosphate = D-glycero-alpha-D-manno-heptose 7-phosphate + D-glycero-beta-D-manno-heptose 7-phosphate. It participates in carbohydrate biosynthesis; D-glycero-D-manno-heptose 7-phosphate biosynthesis; D-glycero-alpha-D-manno-heptose 7-phosphate and D-glycero-beta-D-manno-heptose 7-phosphate from sedoheptulose 7-phosphate: step 1/1. Functionally, catalyzes the isomerization of sedoheptulose 7-phosphate in D-glycero-D-manno-heptose 7-phosphate. The sequence is that of Phosphoheptose isomerase from Helicobacter pylori (strain Shi470).